Reading from the N-terminus, the 224-residue chain is Cytochrome c oxidase subunit 2 (224 aa).

The Mitochondrial intermembrane segment spans residues 1 to 26; that stretch reads MSTWGQINLMDPASPIQMEMMLFHDH. The helical transmembrane segment at 27 to 48 threads the bilayer; the sequence is AMAILIGIFTLVSLLGVKLCFN. Over 49–62 the chain is Mitochondrial matrix; that stretch reads TLSTRTMHEAQLLE. The chain crosses the membrane as a helical span at residues 63–82; the sequence is TLWTILPAFLLVWLALPSLR. Residues 83-224 lie on the Mitochondrial intermembrane side of the membrane; it reads LLYLLDEQGS…DVKDFIKMCN (142 aa). Positions 161, 196, 198, 200, 204, and 207 each coordinate Cu cation. E198 contributes to the Mg(2+) binding site.

This sequence belongs to the cytochrome c oxidase subunit 2 family. In terms of assembly, component of the cytochrome c oxidase (complex IV, CIV), a multisubunit enzyme composed of a catalytic core of 3 subunits and several supernumerary subunits. The complex exists as a monomer or a dimer and forms supercomplexes (SCs) in the inner mitochondrial membrane with ubiquinol-cytochrome c oxidoreductase (cytochrome b-c1 complex, complex III, CIII). Requires Cu cation as cofactor.

It localises to the mitochondrion inner membrane. The catalysed reaction is 4 Fe(II)-[cytochrome c] + O2 + 8 H(+)(in) = 4 Fe(III)-[cytochrome c] + 2 H2O + 4 H(+)(out). Its function is as follows. Component of the cytochrome c oxidase, the last enzyme in the mitochondrial electron transport chain which drives oxidative phosphorylation. The respiratory chain contains 3 multisubunit complexes succinate dehydrogenase (complex II, CII), ubiquinol-cytochrome c oxidoreductase (cytochrome b-c1 complex, complex III, CIII) and cytochrome c oxidase (complex IV, CIV), that cooperate to transfer electrons derived from NADH and succinate to molecular oxygen, creating an electrochemical gradient over the inner membrane that drives transmembrane transport and the ATP synthase. Cytochrome c oxidase is the component of the respiratory chain that catalyzes the reduction of oxygen to water. Electrons originating from reduced cytochrome c in the intermembrane space (IMS) are transferred via the dinuclear copper A center (CU(A)) of subunit 2 and heme A of subunit 1 to the active site in subunit 1, a binuclear center (BNC) formed by heme A3 and copper B (CU(B)). The BNC reduces molecular oxygen to 2 water molecules using 4 electrons from cytochrome c in the IMS and 4 protons from the mitochondrial matrix. The polypeptide is Cytochrome c oxidase subunit 2 (COII) (Albinaria caerulea (Land snail)).